The chain runs to 75 residues: Translation initiation factor IF-1, chloroplastic (75 aa).

This sequence belongs to the IF-1 family. In terms of assembly, component of the 30S ribosomal translation pre-initiation complex which assembles on the 30S ribosome in the order IF-2 and IF-3, IF-1 and N-formylmethionyl-tRNA(fMet); mRNA recruitment can occur at any time during PIC assembly.

Its subcellular location is the plastid. It is found in the chloroplast. Functionally, one of the essential components for the initiation of protein synthesis. Stabilizes the binding of IF-2 and IF-3 on the 30S subunit to which N-formylmethionyl-tRNA(fMet) subsequently binds. Helps modulate mRNA selection, yielding the 30S pre-initiation complex (PIC). Upon addition of the 50S ribosomal subunit IF-1, IF-2 and IF-3 are released leaving the mature 70S translation initiation complex. In Cucumis sativus (Cucumber), this protein is Translation initiation factor IF-1, chloroplastic (infA).